A 350-amino-acid polypeptide reads, in one-letter code: Integrin beta-1-binding protein 2 (350 aa).

Zn(2+)-binding residues include cysteine 5, cysteine 10, cysteine 24, and histidine 27. The 60-residue stretch at 5-64 folds into the CHORD 1 domain; that stretch reads CYNKGCGQHFDPNTNLPDSCRYHPGVPIFHDALKGWSCCRKRTVDFSEFLNIKGCTVGLH. The short motif at 28–31 is the SH3-binding element; the sequence is PGVP. Cysteine 42, cysteine 43, cysteine 59, and histidine 64 together coordinate Zn(2+). The SH3-binding motif lies at 70–79; the sequence is PEVPPQPEGP. The segment at 72–92 is disordered; the sequence is VPPQPEGPATSSLQEQKPLNT. Residues 80–92 are compositionally biased toward polar residues; the sequence is ATSSLQEQKPLNT. Residues cysteine 150 and cysteine 155 each contribute to the Zn(2+) site. Residues 150 to 209 enclose the CHORD 2 domain; it reads CQNPGCDAVYQGPESDATPCTYHPGAPRFHEGMKSWSCCGIQTLDFGAFLAQPGCRVGRH. Residues 159–162 carry the SH2-binding motif; sequence YQGP. The Zn(2+) site is built by cysteine 169 and histidine 172. The SH3-binding signature appears at 173 to 176; that stretch reads PGAP. Residues cysteine 187, cysteine 188, cysteine 204, and histidine 209 each contribute to the Zn(2+) site. The 90-residue stretch at 216 to 305 folds into the CS domain; it reads PASCRHDWHQ…ADPGSWAQLE (90 aa). An SH2-binding motif is present at residues 235-238; sequence YGQI. Residues 317–350 are disordered; the sequence is GVLLEMDEEESEDSDDDLSWTEEEDEEEEEAMGE. The span at 321–350 shows a compositional bias: acidic residues; it reads EMDEEESEDSDDDLSWTEEEDEEEEEAMGE.

In terms of assembly, interacts with beta-1 integrin subunit. This interaction is regulated by divalent cations, and it occurs only in absence of calcium. Expressed in skeletal and cardiac muscles but not in other tissues. Is localized in rows flanking the Z line containing alpha-actinin.

Its function is as follows. May play a role during maturation and/or organization of muscles cells. The sequence is that of Integrin beta-1-binding protein 2 (Itgb1bp2) from Mus musculus (Mouse).